The primary structure comprises 418 residues: Glutamyl-tRNA reductase (418 aa).

Residues 49 to 52, S107, 112 to 114, and Q118 each bind substrate; these read TCNR and EPQ. The active-site Nucleophile is the C50. 187–192 serves as a coordination point for NADP(+); it reads GAGETI.

This sequence belongs to the glutamyl-tRNA reductase family. As to quaternary structure, homodimer.

It carries out the reaction (S)-4-amino-5-oxopentanoate + tRNA(Glu) + NADP(+) = L-glutamyl-tRNA(Glu) + NADPH + H(+). It participates in porphyrin-containing compound metabolism; protoporphyrin-IX biosynthesis; 5-aminolevulinate from L-glutamyl-tRNA(Glu): step 1/2. Catalyzes the NADPH-dependent reduction of glutamyl-tRNA(Glu) to glutamate 1-semialdehyde (GSA). The polypeptide is Glutamyl-tRNA reductase (Aeromonas salmonicida (strain A449)).